A 599-amino-acid chain; its full sequence is Dehydrogenase eriK (599 aa).

An N-terminal signal peptide occupies residues 1–20 (MAFLKARLAALLSVAVSCSA). Residues 43–44 (TA) and 64–65 (EG) contribute to the FAD site. A glycan (N-linked (GlcNAc...) asparagine) is linked at asparagine 93. FAD is bound at residue 122-125 (NGMY). 13 N-linked (GlcNAc...) asparagine glycosylation sites follow: asparagine 169, asparagine 191, asparagine 234, asparagine 260, asparagine 284, asparagine 319, asparagine 339, asparagine 353, asparagine 365, asparagine 370, asparagine 398, asparagine 456, and asparagine 518. Residues alanine 569 and 580-581 (TQ) each bind FAD.

This sequence belongs to the GMC oxidoreductase family. In terms of assembly, homodimer. FAD is required as a cofactor.

In terms of biological role, dehydrogenase; part of the gene cluster that mediates the biosynthesis of erinacines, cyathane-xylosides that show unique biological activities, including leishmanicidal activity, stimulating activity for nerve growth-factor synthesis, and agonistic activity toward the kappa opioid receptor. The role of the dehydrogenase eriK within the pathway has still to be determined. The first step of the erinacines biosynthesis pathway is catalyzed by the geranylgeranyl diphosphate (GGPP) synthase eriE via conversion of farnesyl pyrophosphate and isopentyl pyrophosphate into geranylgeranyl pyrophosphate (GGPP). GGPP is then substrate of the diterpene cyclase eriG for the production of cyatha-3,12-diene. The cytochrome P450 monooxygenase eriI then hydroxylates cyatha-3,12-diene at C-14 of the seven-membered ring to produce erinacol, which is further hydroxylated at C-15 by the cytochrome P450 monooxygenase eriC to yield cyathadiol. The cytochrome P450 monooxygenase eriA then catalyzes C-11 hydroxylation in the presence of the short chain dehydrogenase/reductase (SDR) eriH, which leads to the production of cyathatriol. The acetyltransferase eriL converts cyathatriol into 11-O-acetyl-cyathatriol. The SDR eriH catalyzes further oxidation of 11-O-acetyl-cyathatriol into 1-O-acetylcyathin A3. Finally, the glycosyl transferase eriJ tranfers xylose from UDP-xylose onto C-14 of 11-O-acetyl-cyathatriol to form eracine Q. EriJ is also able to convert 11-O-acetyl-cyathatriol to eracine Q2 by using UDP-D-glucose as cosubstrate, but at a lower rate. The polypeptide is Dehydrogenase eriK (Hericium erinaceus (Lion's mane mushroom)).